The following is a 192-amino-acid chain: Adenylate kinase (192 aa).

Gly10–Thr18 provides a ligand contact to ATP.

Belongs to the archaeal adenylate kinase family. Monomer.

The protein localises to the cytoplasm. It catalyses the reaction AMP + ATP = 2 ADP. In Methanothermococcus thermolithotrophicus (Methanococcus thermolithotrophicus), this protein is Adenylate kinase (adkA).